The sequence spans 100 residues: Envelope glycoprotein N (100 aa).

The signal sequence occupies residues 1–27 (MLSTRFVTLAILACLLVVLGLARGAGG). The Virion surface segment spans residues 28–63 (DPGVKQRIDVAREEERRDFWHAACSGHGFPITTPST). A helical transmembrane segment spans residues 64–84 (AAILFYVSLLAVGVAVACQAY). Residues 85-100 (RAVLRIVTLEMLQHLH) are Intravirion-facing.

This sequence belongs to the herpesviridae glycoprotein N family. In terms of assembly, interacts (via N-terminus) with gM (via N-terminus). The gM-gN heterodimer forms the gCII complex.

It localises to the virion membrane. The protein localises to the host membrane. It is found in the host Golgi apparatus. The protein resides in the host trans-Golgi network. Its function is as follows. Envelope glycoprotein necessary for proper maturation of gM and modulation of its membrane fusion activity. Also plays a critical role in virion morphogenesis. In Equus caballus (Horse), this protein is Envelope glycoprotein N.